The chain runs to 270 residues: Interleukin-1 alpha (270 aa).

A propeptide spanning residues 1-112 is cleaved from the precursor; the sequence is MAKVPDLFED…DTEEEIIKPR (112 aa). Position 82 is an N6-acetyllysine (Lys-82). Residues 82-86 form a nuclear localization signal (NLS) region; that stretch reads KKRRL. Ser-87 carries the phosphoserine modification. N-linked (GlcNAc...) asparagine glycans are attached at residues Asn-102 and Asn-141.

Belongs to the IL-1 family. As to quaternary structure, monomer. Interacts with TMED10; the interaction mediates the translocation from the cytoplasm into the ERGIC (endoplasmic reticulum-Golgi intermediate compartment) and thereby secretion. Interacts with IL1R1. Interacts with S100A13; this interaction is the first step in the export of IL1A, followed by direct translocation of this complex across the plasma membrane. Acetylated within its nuclear localization sequence, which impacts subcellular localization. Post-translationally, proteolytic processed by CAPN1 in a calcium-dependent manner. Cleavage from 31 kDa precursor to 18 kDa biologically active molecules. In terms of processing, phosphorylated. Phosphorylation greatly enhances susceptibility to digestion and promotes the conversion of pre-IL1A alpha to the biologically active IL1A.

It is found in the nucleus. The protein localises to the cytoplasm. It localises to the secreted. In terms of biological role, cytokine constitutively present intracellularly in nearly all resting non-hematopoietic cells that plays an important role in inflammation and bridges the innate and adaptive immune systems. After binding to its receptor IL1R1 together with its accessory protein IL1RAP, forms the high affinity interleukin-1 receptor complex. Signaling involves the recruitment of adapter molecules such as MYD88, IRAK1 or IRAK4. In turn, mediates the activation of NF-kappa-B and the three MAPK pathways p38, p42/p44 and JNK pathways. Within the cell, acts as an alarmin and cell death results in its liberation in the extracellular space after disruption of the cell membrane to induce inflammation and alert the host to injury or damage. In addition to its role as a danger signal, which occurs when the cytokine is passively released by cell necrosis, directly senses DNA damage and acts as signal for genotoxic stress without loss of cell integrity. This is Interleukin-1 alpha (IL1A) from Sus scrofa (Pig).